We begin with the raw amino-acid sequence, 600 residues long: Cationic amino acid transporter 4, vacuolar (600 aa).

Over methionine 1–aspartate 32 the chain is Cytoplasmic. The chain crosses the membrane as a helical span at residues leucine 33–valine 53. The Vacuolar segment spans residues alanine 54–proline 60. A helical transmembrane segment spans residues alanine 61–alanine 81. Over glutamate 82–serine 92 the chain is Cytoplasmic. A helical membrane pass occupies residues alanine 93–leucine 115. Residues aspartate 116 to proline 152 are Vacuolar-facing. The chain crosses the membrane as a helical span at residues glycine 153–leucine 173. Topologically, residues cysteine 174 to glutamine 184 are cytoplasmic. A helical transmembrane segment spans residues alanine 185–leucine 205. The Vacuolar portion of the chain corresponds to alanine 206–tyrosine 220. A helical transmembrane segment spans residues phenylalanine 221 to glycine 241. Topologically, residues phenylalanine 242–glycine 264 are cytoplasmic. Residues isoleucine 265–valine 285 traverse the membrane as a helical segment. Over proline 286 to alanine 308 the chain is Vacuolar. Residues alanine 309–leucine 329 traverse the membrane as a helical segment. Residues alanine 330–lysine 360 are Cytoplasmic-facing. The chain crosses the membrane as a helical span at residues serine 361–leucine 381. Residue serine 382 is a topological domain, vacuolar. A helical membrane pass occupies residues glutamate 383–leucine 403. Residues arginine 404–lysine 462 are Cytoplasmic-facing. The chain crosses the membrane as a helical span at residues isoleucine 463–serine 483. At alanine 484–arginine 492 the chain is on the vacuolar side. A helical transmembrane segment spans residues phenylalanine 493–isoleucine 513. Over aspartate 514 to phenylalanine 528 the chain is Cytoplasmic. Residues leucine 529–isoleucine 549 traverse the membrane as a helical segment. Asparagine 550 is a topological domain (vacuolar). A helical membrane pass occupies residues isoleucine 551 to isoleucine 571. Residues phenylalanine 572–alanine 600 lie on the Cytoplasmic side of the membrane.

Belongs to the amino acid-polyamine-organocation (APC) superfamily. Cationic amino acid transporter (CAT) (TC 2.A.3.3) family. In terms of tissue distribution, expressed in roots, stems, flowers, and leaves.

The protein resides in the vacuole membrane. In terms of biological role, permease involved in the transport of the cationic amino acids. The polypeptide is Cationic amino acid transporter 4, vacuolar (CAT4) (Arabidopsis thaliana (Mouse-ear cress)).